Consider the following 195-residue polypeptide: Imidazoleglycerol-phosphate dehydratase (195 aa).

Belongs to the imidazoleglycerol-phosphate dehydratase family.

The protein resides in the cytoplasm. It carries out the reaction D-erythro-1-(imidazol-4-yl)glycerol 3-phosphate = 3-(imidazol-4-yl)-2-oxopropyl phosphate + H2O. Its pathway is amino-acid biosynthesis; L-histidine biosynthesis; L-histidine from 5-phospho-alpha-D-ribose 1-diphosphate: step 6/9. The polypeptide is Imidazoleglycerol-phosphate dehydratase (Burkholderia lata (strain ATCC 17760 / DSM 23089 / LMG 22485 / NCIMB 9086 / R18194 / 383)).